The chain runs to 426 residues: Serine--tRNA ligase (426 aa).

An L-serine-binding site is contributed by 233 to 235 (TAE). 264–266 (RSE) lines the ATP pocket. An L-serine-binding site is contributed by Glu-287. ATP is bound at residue 351-354 (EISS). Ser-387 contacts L-serine.

This sequence belongs to the class-II aminoacyl-tRNA synthetase family. Type-1 seryl-tRNA synthetase subfamily. As to quaternary structure, homodimer. The tRNA molecule binds across the dimer.

The protein localises to the cytoplasm. It carries out the reaction tRNA(Ser) + L-serine + ATP = L-seryl-tRNA(Ser) + AMP + diphosphate + H(+). It catalyses the reaction tRNA(Sec) + L-serine + ATP = L-seryl-tRNA(Sec) + AMP + diphosphate + H(+). Its pathway is aminoacyl-tRNA biosynthesis; selenocysteinyl-tRNA(Sec) biosynthesis; L-seryl-tRNA(Sec) from L-serine and tRNA(Sec): step 1/1. Functionally, catalyzes the attachment of serine to tRNA(Ser). Is also able to aminoacylate tRNA(Sec) with serine, to form the misacylated tRNA L-seryl-tRNA(Sec), which will be further converted into selenocysteinyl-tRNA(Sec). The chain is Serine--tRNA ligase from Clostridium botulinum (strain Hall / ATCC 3502 / NCTC 13319 / Type A).